Consider the following 260-residue polypeptide: Proteasome assembly chaperone 2 (260 aa).

Belongs to the PSMG2 family. Forms a heterodimer with psmg1. Degraded by the proteasome upon completion of 20S proteasome maturation.

It localises to the nucleus. Functionally, chaperone protein which promotes assembly of the 20S proteasome as part of a heterodimer with psmg1. In Danio rerio (Zebrafish), this protein is Proteasome assembly chaperone 2.